The sequence spans 214 residues: NADH-quinone oxidoreductase subunit C (214 aa).

This sequence belongs to the complex I 30 kDa subunit family. As to quaternary structure, NDH-1 is composed of 14 different subunits. Subunits NuoB, C, D, E, F, and G constitute the peripheral sector of the complex.

Its subcellular location is the cell inner membrane. The catalysed reaction is a quinone + NADH + 5 H(+)(in) = a quinol + NAD(+) + 4 H(+)(out). Its function is as follows. NDH-1 shuttles electrons from NADH, via FMN and iron-sulfur (Fe-S) centers, to quinones in the respiratory chain. The immediate electron acceptor for the enzyme in this species is believed to be ubiquinone. Couples the redox reaction to proton translocation (for every two electrons transferred, four hydrogen ions are translocated across the cytoplasmic membrane), and thus conserves the redox energy in a proton gradient. The polypeptide is NADH-quinone oxidoreductase subunit C (Francisella tularensis subsp. mediasiatica (strain FSC147)).